Reading from the N-terminus, the 638-residue chain is Threonine--tRNA ligase (638 aa).

The region spanning 1–61 (MPVITLPDGS…SVDGKLQIIT (61 aa)) is the TGS domain. A catalytic region spans residues 243-534 (DHRKIGKTQD…LTEEYAGFFP (292 aa)). Residues cysteine 334, histidine 385, and histidine 511 each contribute to the Zn(2+) site.

It belongs to the class-II aminoacyl-tRNA synthetase family. In terms of assembly, homodimer. Requires Zn(2+) as cofactor.

It localises to the cytoplasm. The enzyme catalyses tRNA(Thr) + L-threonine + ATP = L-threonyl-tRNA(Thr) + AMP + diphosphate + H(+). In terms of biological role, catalyzes the attachment of threonine to tRNA(Thr) in a two-step reaction: L-threonine is first activated by ATP to form Thr-AMP and then transferred to the acceptor end of tRNA(Thr). Also edits incorrectly charged L-seryl-tRNA(Thr). The sequence is that of Threonine--tRNA ligase from Hamiltonella defensa subsp. Acyrthosiphon pisum (strain 5AT).